Consider the following 507-residue polypeptide: Ribonuclease Y (507 aa).

The helical transmembrane segment at 1–21 (MLWYIVAGAGGLLIGYLIASY) threads the bilayer. Positions 197-282 (TVSTVSLPSD…EMYEKAKQEV (86 aa)) constitute a KH domain. The HD domain occupies 323–416 (VLNHSIEVAL…VAAADALSAA (94 aa)).

This sequence belongs to the RNase Y family.

Its subcellular location is the cell membrane. Endoribonuclease that initiates mRNA decay. The polypeptide is Ribonuclease Y (Thermotoga petrophila (strain ATCC BAA-488 / DSM 13995 / JCM 10881 / RKU-1)).